Reading from the N-terminus, the 377-residue chain is Succinyl-diaminopimelate desuccinylase (377 aa).

His67 contributes to the Zn(2+) binding site. The active site involves Asp69. Residue Asp100 participates in Zn(2+) binding. The Proton acceptor role is filled by Glu134. Glu135, Glu163, and His349 together coordinate Zn(2+).

This sequence belongs to the peptidase M20A family. DapE subfamily. Homodimer. Requires Zn(2+) as cofactor. Co(2+) is required as a cofactor.

It carries out the reaction N-succinyl-(2S,6S)-2,6-diaminopimelate + H2O = (2S,6S)-2,6-diaminopimelate + succinate. The protein operates within amino-acid biosynthesis; L-lysine biosynthesis via DAP pathway; LL-2,6-diaminopimelate from (S)-tetrahydrodipicolinate (succinylase route): step 3/3. Its function is as follows. Catalyzes the hydrolysis of N-succinyl-L,L-diaminopimelic acid (SDAP), forming succinate and LL-2,6-diaminopimelate (DAP), an intermediate involved in the bacterial biosynthesis of lysine and meso-diaminopimelic acid, an essential component of bacterial cell walls. The polypeptide is Succinyl-diaminopimelate desuccinylase (Haemophilus influenzae (strain PittGG)).